We begin with the raw amino-acid sequence, 819 residues long: ATP-dependent DNA helicase PIF4 (819 aa).

Residues 1 to 84 constitute a mitochondrion transit peptide; that stretch reads MLLNSTRTLL…RQASSAGHND (84 aa). Residues 76-101 are disordered; that stretch reads QASSAGHNDLGLQEKEKSSGDESAFS. 126-133 is a binding site for ATP; the sequence is GGAGVGKS. A DNA-binding region spans residues 734–754; sequence HIIYVAASRVKKFSQLRMINV.

The protein belongs to the helicase family. PIF1 subfamily. Monomer. Mg(2+) serves as cofactor.

Its subcellular location is the mitochondrion matrix. The protein resides in the kinetoplast. The enzyme catalyses Couples ATP hydrolysis with the unwinding of duplex DNA at the replication fork by translocating in the 5'-3' direction. This creates two antiparallel DNA single strands (ssDNA). The leading ssDNA polymer is the template for DNA polymerase III holoenzyme which synthesizes a continuous strand.. The catalysed reaction is ATP + H2O = ADP + phosphate + H(+). In terms of biological role, DNA-dependent ATPase and 5'-3' DNA helicase required for the maintenance of mitochondrial (kinetoplast) genome stability. In Trypanosoma brucei brucei (strain 927/4 GUTat10.1), this protein is ATP-dependent DNA helicase PIF4.